A 239-amino-acid chain; its full sequence is MNPVRTLSATKAAFFSAYPRPINAAYRRVVEELLVELHLTTVNSAFVYDPFFALGLVTLYDSLMEAYHPPEQREAIFNALCKALHLKPEVLRKNARDLLELMRSGDPVQRYNLLCLKPEAEDVGGLKAILQRMTQPPYAYSRVLAVGLYTAYEAVATSLYKEPEERTRHFLEDVIGNLPFSPERVKKDLELYRSNLDRLKQARAIVEEMVKAARRQQERRQSTASLPETPAADRRESSG.

A coiled-coil region spans residues 183–219 (ERVKKDLELYRSNLDRLKQARAIVEEMVKAARRQQER). A compositionally biased stretch (basic and acidic residues) spans 211-221 (KAARRQQERRQ). Residues 211-239 (KAARRQQERRQSTASLPETPAADRRESSG) form a disordered region.

This sequence belongs to the THF1 family.

May be involved in photosynthetic membrane biogenesis. The sequence is that of Protein Thf1 from Synechococcus sp. (strain JA-3-3Ab) (Cyanobacteria bacterium Yellowstone A-Prime).